A 608-amino-acid polypeptide reads, in one-letter code: Kelch-like protein 10 (608 aa).

The 68-residue stretch at 39–106 (CDVVIKVNGF…AYTRTVPITP (68 aa)) folds into the BTB domain. 6 Kelch repeats span residues 292 to 339 (ILFA…YLKG), 340 to 386 (YVYI…VLSN), 388 to 433 (IYAM…TLYG), 434 to 480 (KVYI…AYGE), 481 to 527 (HVYA…VVDD), and 529 to 574 (LFVV…VVPG). At serine 501 the chain carries Phosphoserine.

As to quaternary structure, self-associates. Interacts with CUL3; indicative for the participation in an E3 ubiquitin ligase complex.

Its subcellular location is the cytoplasm. Its pathway is protein modification; protein ubiquitination. May be a substrate-specific adapter of a CUL3-based E3 ubiquitin-protein ligase complex which mediates the ubiquitination and subsequent proteasomal degradation of target proteins during spermatogenesis. The chain is Kelch-like protein 10 (Klhl10) from Rattus norvegicus (Rat).